Reading from the N-terminus, the 369-residue chain is Phosphate acyltransferase (369 aa).

Residues 342–369 form a disordered region; sequence ASRAPNSQTAGGERAAAVPQSAQLRMDS.

It belongs to the PlsX family. As to quaternary structure, homodimer. Probably interacts with PlsY.

The protein localises to the cytoplasm. The catalysed reaction is a fatty acyl-[ACP] + phosphate = an acyl phosphate + holo-[ACP]. It participates in lipid metabolism; phospholipid metabolism. In terms of biological role, catalyzes the reversible formation of acyl-phosphate (acyl-PO(4)) from acyl-[acyl-carrier-protein] (acyl-ACP). This enzyme utilizes acyl-ACP as fatty acyl donor, but not acyl-CoA. This Methylocella silvestris (strain DSM 15510 / CIP 108128 / LMG 27833 / NCIMB 13906 / BL2) protein is Phosphate acyltransferase.